A 183-amino-acid polypeptide reads, in one-letter code: Proton-transporting V-type ATPase complex assembly regulator TMEM9 (183 aa).

Positions 1–20 (MKLLCLVAVVGCLLVPPAQA) are cleaved as a signal peptide. 3 N-linked (GlcNAc...) asparagine glycosylation sites follow: Asn-21, Asn-38, and Asn-47. At 21-89 (NKSSEDIRCK…YEERSTTTIK (69 aa)) the chain is on the extracellular side. The chain crosses the membrane as a helical span at residues 90–110 (VIIVIYLSVVGALLLYMAFLM). Residues 111–183 (LVDPLIRKPD…TVFDRHKMLS (73 aa)) are Cytoplasmic-facing. At Ser-144 the chain carries Phosphoserine.

The protein belongs to the TMEM9 family. In terms of assembly, interacts with the v-ATPase accessory protein ATP6AP2 and with the v-ATPase complex subunit ATP6V0D1; these interactions lead to the assembly of the v-ATPase complex. Post-translationally, N-glycosylated. In terms of tissue distribution, expressed in heart, lung, kidney, liver and intestines. Enriched in the hepatocytes around the central vein.

Its subcellular location is the lysosome membrane. It is found in the late endosome membrane. It localises to the endosome. The protein localises to the multivesicular body membrane. Its function is as follows. Transmembrane protein that binds to and facilitates the assembly of lysosomal proton-transporting V-type ATPase (v-ATPase), resulting in enhanced lysosomal acidification and trafficking. By bringing the v-ATPase accessory protein ATP6AP2 and the v-ATPase subunit ATP6V0D1 together, allows v-ATPase complex formation and activation. TMEM9-controlled vesicular acidification induces hyperactivation of Wnt/beta-catenin signaling, involved in development, tissue homeostasis and tissue regeneration, through lysosomal degradation of adenomatous polyposis coli/APC. In the liver, involved in hepatic regeneration. This is Proton-transporting V-type ATPase complex assembly regulator TMEM9 from Mus musculus (Mouse).